The following is a 481-amino-acid chain: Argininosuccinate lyase (481 aa).

Over residues 1–17 the composition is skewed to polar residues; that stretch reads MKNAPVDTQSDAATSFE. Residues 1 to 25 form a disordered region; it reads MKNAPVDTQSDAATSFEGTAANPQW.

Belongs to the lyase 1 family. Argininosuccinate lyase subfamily.

It is found in the cytoplasm. It carries out the reaction 2-(N(omega)-L-arginino)succinate = fumarate + L-arginine. Its pathway is amino-acid biosynthesis; L-arginine biosynthesis; L-arginine from L-ornithine and carbamoyl phosphate: step 3/3. This Gluconobacter oxydans (strain 621H) (Gluconobacter suboxydans) protein is Argininosuccinate lyase.